The chain runs to 364 residues: UDP-N-acetylglucosamine--N-acetylmuramyl-(pentapeptide) pyrophosphoryl-undecaprenol N-acetylglucosamine transferase (364 aa).

Residues 10–12, Asn-128, Arg-170, Ser-199, Ile-250, and Gln-295 contribute to the UDP-N-acetyl-alpha-D-glucosamine site; that span reads TGG.

Belongs to the glycosyltransferase 28 family. MurG subfamily.

The protein resides in the cell inner membrane. It carries out the reaction di-trans,octa-cis-undecaprenyl diphospho-N-acetyl-alpha-D-muramoyl-L-alanyl-D-glutamyl-meso-2,6-diaminopimeloyl-D-alanyl-D-alanine + UDP-N-acetyl-alpha-D-glucosamine = di-trans,octa-cis-undecaprenyl diphospho-[N-acetyl-alpha-D-glucosaminyl-(1-&gt;4)]-N-acetyl-alpha-D-muramoyl-L-alanyl-D-glutamyl-meso-2,6-diaminopimeloyl-D-alanyl-D-alanine + UDP + H(+). Its pathway is cell wall biogenesis; peptidoglycan biosynthesis. Its function is as follows. Cell wall formation. Catalyzes the transfer of a GlcNAc subunit on undecaprenyl-pyrophosphoryl-MurNAc-pentapeptide (lipid intermediate I) to form undecaprenyl-pyrophosphoryl-MurNAc-(pentapeptide)GlcNAc (lipid intermediate II). This is UDP-N-acetylglucosamine--N-acetylmuramyl-(pentapeptide) pyrophosphoryl-undecaprenol N-acetylglucosamine transferase from Chlorobaculum tepidum (strain ATCC 49652 / DSM 12025 / NBRC 103806 / TLS) (Chlorobium tepidum).